We begin with the raw amino-acid sequence, 414 residues long: Probable tRNA pseudouridine synthase D (414 aa).

D90 serves as the catalytic Nucleophile. A TRUD domain is found at G162–A382.

It belongs to the pseudouridine synthase TruD family.

It carries out the reaction uridine(13) in tRNA = pseudouridine(13) in tRNA. In terms of biological role, could be responsible for synthesis of pseudouridine from uracil-13 in transfer RNAs. In Picrophilus torridus (strain ATCC 700027 / DSM 9790 / JCM 10055 / NBRC 100828 / KAW 2/3), this protein is Probable tRNA pseudouridine synthase D.